The following is a 563-amino-acid chain: Sulfite reductase [NADPH] hemoprotein beta-component (563 aa).

Residues Cys-427, Cys-433, Cys-472, and Cys-476 each coordinate [4Fe-4S] cluster. Cys-476 lines the siroheme pocket.

Belongs to the nitrite and sulfite reductase 4Fe-4S domain family. As to quaternary structure, alpha(8)-beta(8). The alpha component is a flavoprotein, the beta component is a hemoprotein. Siroheme is required as a cofactor. [4Fe-4S] cluster serves as cofactor.

It catalyses the reaction hydrogen sulfide + 3 NADP(+) + 3 H2O = sulfite + 3 NADPH + 4 H(+). It functions in the pathway sulfur metabolism; hydrogen sulfide biosynthesis; hydrogen sulfide from sulfite (NADPH route): step 1/1. In terms of biological role, component of the sulfite reductase complex that catalyzes the 6-electron reduction of sulfite to sulfide. This is one of several activities required for the biosynthesis of L-cysteine from sulfate. The sequence is that of Sulfite reductase [NADPH] hemoprotein beta-component from Acidithiobacillus ferrooxidans (strain ATCC 53993 / BNL-5-31) (Leptospirillum ferrooxidans (ATCC 53993)).